Reading from the N-terminus, the 39-residue chain is Photosystem II reaction center protein L (39 aa).

A helical membrane pass occupies residues S18–F38.

The protein belongs to the PsbL family. PSII is composed of 1 copy each of membrane proteins PsbA, PsbB, PsbC, PsbD, PsbE, PsbF, PsbH, PsbI, PsbJ, PsbK, PsbL, PsbM, PsbT, PsbX, PsbY, PsbZ, Psb30/Ycf12, peripheral proteins PsbO, CyanoQ (PsbQ), PsbU, PsbV and a large number of cofactors. It forms dimeric complexes.

It is found in the cellular thylakoid membrane. Its function is as follows. One of the components of the core complex of photosystem II (PSII). PSII is a light-driven water:plastoquinone oxidoreductase that uses light energy to abstract electrons from H(2)O, generating O(2) and a proton gradient subsequently used for ATP formation. It consists of a core antenna complex that captures photons, and an electron transfer chain that converts photonic excitation into a charge separation. This subunit is found at the monomer-monomer interface and is required for correct PSII assembly and/or dimerization. This is Photosystem II reaction center protein L from Trichormus variabilis (strain ATCC 29413 / PCC 7937) (Anabaena variabilis).